A 297-amino-acid chain; its full sequence is Heterogeneous nuclear ribonucleoprotein D-like (297 aa).

Residues 1 to 21 form a disordered region; sequence MTGFGATPDFNEGSKINASKN. RRM domains are found at residues 26–108 and 111–190; these read GKMF…KGKE and KKVF…QPKE. The interval 192-224 is disordered; the sequence is YRQQQQKQQKGGRGAATGRGGARGRGRGQGWNQ. Residues 202–222 show a composition bias toward gly residues; that stretch reads GGRGAATGRGGARGRGRGQGW.

Its subcellular location is the nucleus. The protein resides in the cytoplasm. Its function is as follows. Acts as a transcriptional regulator. Binds DNA and RNA. The sequence is that of Heterogeneous nuclear ribonucleoprotein D-like (hnrnpdl) from Xenopus tropicalis (Western clawed frog).